The following is a 243-amino-acid chain: 2-O-methyltransferase NoeI (243 aa).

This sequence belongs to the FkbM methyltransferase family.

Its subcellular location is the cytoplasm. Required for 2-O-methylation of the fucosyl group of Nod factors. The polypeptide is 2-O-methyltransferase NoeI (noeI) (Sinorhizobium fredii (strain NBRC 101917 / NGR234)).